We begin with the raw amino-acid sequence, 35 residues long: MFDDQDLGFFANFLGIFIFILVIAYHFVMADPKFE.

Topologically, residues 1–8 are lumenal; it reads MFDDQDLG. The chain crosses the membrane as a helical span at residues 9–29; the sequence is FFANFLGIFIFILVIAYHFVM. Residues 30 to 35 lie on the Cytoplasmic side of the membrane; that stretch reads ADPKFE.

Belongs to the OST4 family. In terms of assembly, component of the oligosaccharyltransferase (OST) complex.

The protein localises to the endoplasmic reticulum membrane. In terms of biological role, subunit of the oligosaccharyl transferase (OST) complex that catalyzes the initial transfer of a defined glycan (Glc(3)Man(9)GlcNAc(2) in eukaryotes) from the lipid carrier dolichol-pyrophosphate to an asparagine residue within an Asn-X-Ser/Thr consensus motif in nascent polypeptide chains, the first step in protein N-glycosylation. N-glycosylation occurs cotranslationally and the complex associates with the Sec61 complex at the channel-forming translocon complex that mediates protein translocation across the endoplasmic reticulum (ER). All subunits are required for a maximal enzyme activity. This is Dolichyl-diphosphooligosaccharide--protein glycosyltransferase subunit 4C (OST4C) from Arabidopsis thaliana (Mouse-ear cress).